The sequence spans 101 residues: UPF0473 protein spr0177 (101 aa).

It belongs to the UPF0473 family.

This Streptococcus pneumoniae (strain ATCC BAA-255 / R6) protein is UPF0473 protein spr0177.